The following is a 368-amino-acid chain: L-cysteine desulfhydrase Cds1 (368 aa).

At Lys67 the chain carries N6-(pyridoxal phosphate)lysine. Pyridoxal 5'-phosphate is bound by residues Gly203–Thr207 and Ser299.

This sequence belongs to the cysteine synthase/cystathionine beta-synthase family. Cds1 subfamily. Pyridoxal 5'-phosphate serves as cofactor.

It is found in the cytoplasm. It carries out the reaction L-cysteine + H2O = hydrogen sulfide + pyruvate + NH4(+) + H(+). Its function is as follows. A cysteine desulfhydrase that generates hydrogen sulfide, H(2)S. The H(2)S produced by this enzyme stimulates respiration in M.tuberculosis, mediated primarily via cytochrome bd with a lesser contribution from cytochrome bc1/aa3. H(2)S modulates the balance between respiration and glycolysis, and also contributes to redox homeostasis. Probably eliminates toxic levels of Cys (which can induce oxidative stress). The polypeptide is L-cysteine desulfhydrase Cds1 (Mycobacterium tuberculosis (strain ATCC 25177 / H37Ra)).